The following is a 1623-amino-acid chain: ATP-binding cassette sub-family A member 9 (1623 aa).

A helical transmembrane segment spans residues 31-51 (LLEWLFSLLLILFVYQLSSNL). N-linked (GlcNAc...) asparagine glycosylation occurs at Asn-120. The next 6 helical transmembrane spans lie at 225–245 (FFIFFCVISFSSLIYYLSVNI), 265–285 (AFWLSWSLMYAGFILVVAVLM), 295–315 (VVLTGFMVVFLLFLFYGLSLI), 329–349 (FLTGLAIFILTVFWGSLGFTA), 354–374 (LPAFVEWTLCFLSPFAFTTGM), and 398–418 (LIMATLFMLVLDALLYLVLAL). In terms of domain architecture, ABC transporter 1 spans 481 to 716 (IRIKNLKKEY…WGIGYHLSLH (236 aa)). 517–524 (GHSGAGKT) provides a ligand contact to ATP. A run of 7 helical transmembrane segments spans residues 863–883 (LMTVLLLFGISFVPQLLEHLV), 1025–1045 (AFFWIPVAASLTPYIAMGSIS), 1071–1091 (LVDIPIYFLILFLMQIMDSVF), 1107–1127 (IPCSIGYASSLIFMTYVISFI), 1135–1155 (SGIWSFFFLIVTIFFIIATDI), 1163–1183 (LLICTFLVPPFTLIGSLLIFS), and 1199–1219 (QLVFLALLIPYLHFLLFFFIL). One can recognise an ABC transporter 2 domain in the interval 1287–1520 (LRKEYIGRTK…FGKDYLLEMK (234 aa)). 1325–1332 (GHNGAGKS) serves as a coordination point for ATP.

The protein belongs to the ABC transporter superfamily. ABCA family. Highly expressed in heart and to lower extent in kidney, brain and spleen. Weakly expressed in developing and adult brains. Weakly expressed in the cerebellar granular layer at P14 and P21.

It is found in the membrane. Its function is as follows. Transporter that may play a role in monocyte differentiation and lipid transport and homeostasis. The polypeptide is ATP-binding cassette sub-family A member 9 (Abca9) (Mus musculus (Mouse)).